Reading from the N-terminus, the 428-residue chain is AP2-like ethylene-responsive transcription factor At2g41710 (428 aa).

The segment covering 1–10 has biased composition (polar residues); the sequence is MASVSSSDQG. The tract at residues 1–28 is disordered; it reads MASVSSSDQGPKTEAGCSGGGGGESSET. The AP2/ERF DNA-binding region spans 70–136; the sequence is IYRGVTRHRW…WGPGTLINFP (67 aa).

It belongs to the AP2/ERF transcription factor family. AP2 subfamily.

It localises to the nucleus. Probably acts as a transcriptional activator. Binds to the GCC-box pathogenesis-related promoter element. May be involved in the regulation of gene expression by stress factors and by components of stress signal transduction pathways. The polypeptide is AP2-like ethylene-responsive transcription factor At2g41710 (Arabidopsis thaliana (Mouse-ear cress)).